The chain runs to 505 residues: ATP synthase subunit alpha (505 aa).

An ATP-binding site is contributed by 170–177; it reads GDRQTGKT.

Belongs to the ATPase alpha/beta chains family. As to quaternary structure, F-type ATPases have 2 components, CF(1) - the catalytic core - and CF(0) - the membrane proton channel. CF(1) has five subunits: alpha(3), beta(3), gamma(1), delta(1), epsilon(1). CF(0) has four main subunits: a(1), b(1), b'(1) and c(9-12).

Its subcellular location is the cellular thylakoid membrane. The catalysed reaction is ATP + H2O + 4 H(+)(in) = ADP + phosphate + 5 H(+)(out). Produces ATP from ADP in the presence of a proton gradient across the membrane. The alpha chain is a regulatory subunit. The sequence is that of ATP synthase subunit alpha from Trichodesmium erythraeum (strain IMS101).